Reading from the N-terminus, the 95-residue chain is Aspartyl/glutamyl-tRNA(Asn/Gln) amidotransferase subunit C (95 aa).

It belongs to the GatC family. In terms of assembly, heterotrimer of A, B and C subunits.

The catalysed reaction is L-glutamyl-tRNA(Gln) + L-glutamine + ATP + H2O = L-glutaminyl-tRNA(Gln) + L-glutamate + ADP + phosphate + H(+). The enzyme catalyses L-aspartyl-tRNA(Asn) + L-glutamine + ATP + H2O = L-asparaginyl-tRNA(Asn) + L-glutamate + ADP + phosphate + 2 H(+). Its function is as follows. Allows the formation of correctly charged Asn-tRNA(Asn) or Gln-tRNA(Gln) through the transamidation of misacylated Asp-tRNA(Asn) or Glu-tRNA(Gln) in organisms which lack either or both of asparaginyl-tRNA or glutaminyl-tRNA synthetases. The reaction takes place in the presence of glutamine and ATP through an activated phospho-Asp-tRNA(Asn) or phospho-Glu-tRNA(Gln). This chain is Aspartyl/glutamyl-tRNA(Asn/Gln) amidotransferase subunit C, found in Bradyrhizobium diazoefficiens (strain JCM 10833 / BCRC 13528 / IAM 13628 / NBRC 14792 / USDA 110).